We begin with the raw amino-acid sequence, 193 residues long: Peptidyl-tRNA hydrolase (193 aa).

Y15 provides a ligand contact to tRNA. H20 serves as the catalytic Proton acceptor. F65, N67, and N113 together coordinate tRNA.

The protein belongs to the PTH family. As to quaternary structure, monomer.

The protein resides in the cytoplasm. The enzyme catalyses an N-acyl-L-alpha-aminoacyl-tRNA + H2O = an N-acyl-L-amino acid + a tRNA + H(+). Its function is as follows. Hydrolyzes ribosome-free peptidyl-tRNAs (with 1 or more amino acids incorporated), which drop off the ribosome during protein synthesis, or as a result of ribosome stalling. In terms of biological role, catalyzes the release of premature peptidyl moieties from peptidyl-tRNA molecules trapped in stalled 50S ribosomal subunits, and thus maintains levels of free tRNAs and 50S ribosomes. This Ehrlichia ruminantium (strain Welgevonden) protein is Peptidyl-tRNA hydrolase.